Reading from the N-terminus, the 374-residue chain is Dual-specificity RNA methyltransferase RlmN (374 aa).

E91 (proton acceptor) is an active-site residue. Positions 97–340 constitute a Radical SAM core domain; sequence EDDRGTLCVS…TTVRKTRGDD (244 aa). A disulfide bridge links C104 with C345. Residues C111, C115, and C118 each contribute to the [4Fe-4S] cluster site. S-adenosyl-L-methionine-binding positions include 166–167, S198, 220–222, and N302; these read GE and SLH. The active-site S-methylcysteine intermediate is the C345.

Belongs to the radical SAM superfamily. RlmN family. The cofactor is [4Fe-4S] cluster.

The protein localises to the cytoplasm. The enzyme catalyses adenosine(2503) in 23S rRNA + 2 reduced [2Fe-2S]-[ferredoxin] + 2 S-adenosyl-L-methionine = 2-methyladenosine(2503) in 23S rRNA + 5'-deoxyadenosine + L-methionine + 2 oxidized [2Fe-2S]-[ferredoxin] + S-adenosyl-L-homocysteine. It carries out the reaction adenosine(37) in tRNA + 2 reduced [2Fe-2S]-[ferredoxin] + 2 S-adenosyl-L-methionine = 2-methyladenosine(37) in tRNA + 5'-deoxyadenosine + L-methionine + 2 oxidized [2Fe-2S]-[ferredoxin] + S-adenosyl-L-homocysteine. Specifically methylates position 2 of adenine 2503 in 23S rRNA and position 2 of adenine 37 in tRNAs. m2A2503 modification seems to play a crucial role in the proofreading step occurring at the peptidyl transferase center and thus would serve to optimize ribosomal fidelity. The chain is Dual-specificity RNA methyltransferase RlmN from Delftia acidovorans (strain DSM 14801 / SPH-1).